The chain runs to 153 residues: Endoribonuclease YbeY (153 aa).

Residues histidine 118, histidine 122, and histidine 128 each contribute to the Zn(2+) site.

This sequence belongs to the endoribonuclease YbeY family. The cofactor is Zn(2+).

The protein resides in the cytoplasm. Single strand-specific metallo-endoribonuclease involved in late-stage 70S ribosome quality control and in maturation of the 3' terminus of the 16S rRNA. This is Endoribonuclease YbeY from Pelagibacter ubique (strain HTCC1062).